Consider the following 397-residue polypeptide: Tryptophan synthase beta chain (397 aa).

Lys91 is modified (N6-(pyridoxal phosphate)lysine).

Belongs to the TrpB family. In terms of assembly, tetramer of two alpha and two beta chains. It depends on pyridoxal 5'-phosphate as a cofactor.

It catalyses the reaction (1S,2R)-1-C-(indol-3-yl)glycerol 3-phosphate + L-serine = D-glyceraldehyde 3-phosphate + L-tryptophan + H2O. The protein operates within amino-acid biosynthesis; L-tryptophan biosynthesis; L-tryptophan from chorismate: step 5/5. In terms of biological role, the beta subunit is responsible for the synthesis of L-tryptophan from indole and L-serine. In Bacillus cereus (strain ZK / E33L), this protein is Tryptophan synthase beta chain.